A 253-amino-acid polypeptide reads, in one-letter code: tRNA (guanine-N(1)-)-methyltransferase (253 aa).

Residues Gly-113 and 133-138 contribute to the S-adenosyl-L-methionine site; that span reads IGDYVL.

It belongs to the RNA methyltransferase TrmD family. Homodimer.

The protein localises to the cytoplasm. It carries out the reaction guanosine(37) in tRNA + S-adenosyl-L-methionine = N(1)-methylguanosine(37) in tRNA + S-adenosyl-L-homocysteine + H(+). In terms of biological role, specifically methylates guanosine-37 in various tRNAs. This Chloroflexus aurantiacus (strain ATCC 29366 / DSM 635 / J-10-fl) protein is tRNA (guanine-N(1)-)-methyltransferase.